A 495-amino-acid polypeptide reads, in one-letter code: Putative aldehyde dehydrogenase AldA (495 aa).

Residue 212–218 (GKGSESG) coordinates NAD(+). Catalysis depends on residues E256 and C290.

The protein belongs to the aldehyde dehydrogenase family.

It carries out the reaction an aldehyde + NAD(+) + H2O = a carboxylate + NADH + 2 H(+). This Staphylococcus aureus (strain MSSA476) protein is Putative aldehyde dehydrogenase AldA (aldA).